Consider the following 247-residue polypeptide: Segregation and condensation protein A (247 aa).

The protein belongs to the ScpA family. As to quaternary structure, component of a cohesin-like complex composed of ScpA, ScpB and the Smc homodimer, in which ScpA and ScpB bind to the head domain of Smc. The presence of the three proteins is required for the association of the complex with DNA.

The protein localises to the cytoplasm. Functionally, participates in chromosomal partition during cell division. May act via the formation of a condensin-like complex containing Smc and ScpB that pull DNA away from mid-cell into both cell halves. The protein is Segregation and condensation protein A of Bacillus cereus (strain ATCC 10987 / NRS 248).